The chain runs to 361 residues: Large ribosomal subunit protein mL45 (361 aa).

The disordered stretch occupies residues glutamate 319 to isoleucine 361.

This sequence belongs to the mitochondrion-specific ribosomal protein mL45 family.

It localises to the mitochondrion. The chain is Large ribosomal subunit protein mL45 (mRpL45) from Drosophila melanogaster (Fruit fly).